The chain runs to 312 residues: Methionyl-tRNA formyltransferase (312 aa).

110 to 113 is a binding site for (6S)-5,6,7,8-tetrahydrofolate; that stretch reads SLLP.

Belongs to the Fmt family.

The enzyme catalyses L-methionyl-tRNA(fMet) + (6R)-10-formyltetrahydrofolate = N-formyl-L-methionyl-tRNA(fMet) + (6S)-5,6,7,8-tetrahydrofolate + H(+). Its function is as follows. Attaches a formyl group to the free amino group of methionyl-tRNA(fMet). The formyl group appears to play a dual role in the initiator identity of N-formylmethionyl-tRNA by promoting its recognition by IF2 and preventing the misappropriation of this tRNA by the elongation apparatus. The chain is Methionyl-tRNA formyltransferase from Koribacter versatilis (strain Ellin345).